The chain runs to 283 residues: MEMO1 family protein DKAM_1357 (283 aa).

This sequence belongs to the MEMO1 family.

This Desulfurococcus amylolyticus (strain DSM 18924 / JCM 16383 / VKM B-2413 / 1221n) (Desulfurococcus kamchatkensis) protein is MEMO1 family protein DKAM_1357.